The primary structure comprises 486 residues: UDP-N-acetylmuramate--L-alanine ligase (486 aa).

129–135 is a binding site for ATP; sequence GTHGKTT.

This sequence belongs to the MurCDEF family.

The protein localises to the cytoplasm. It catalyses the reaction UDP-N-acetyl-alpha-D-muramate + L-alanine + ATP = UDP-N-acetyl-alpha-D-muramoyl-L-alanine + ADP + phosphate + H(+). It participates in cell wall biogenesis; peptidoglycan biosynthesis. Functionally, cell wall formation. The chain is UDP-N-acetylmuramate--L-alanine ligase from Vibrio atlanticus (strain LGP32) (Vibrio splendidus (strain Mel32)).